An 83-amino-acid chain; its full sequence is Small ribosomal subunit protein uS17 (83 aa).

This sequence belongs to the universal ribosomal protein uS17 family. Part of the 30S ribosomal subunit.

One of the primary rRNA binding proteins, it binds specifically to the 5'-end of 16S ribosomal RNA. The chain is Small ribosomal subunit protein uS17 from Chlamydia muridarum (strain MoPn / Nigg).